Here is a 158-residue protein sequence, read N- to C-terminus: SsrA-binding protein (158 aa).

This sequence belongs to the SmpB family.

The protein localises to the cytoplasm. In terms of biological role, required for rescue of stalled ribosomes mediated by trans-translation. Binds to transfer-messenger RNA (tmRNA), required for stable association of tmRNA with ribosomes. tmRNA and SmpB together mimic tRNA shape, replacing the anticodon stem-loop with SmpB. tmRNA is encoded by the ssrA gene; the 2 termini fold to resemble tRNA(Ala) and it encodes a 'tag peptide', a short internal open reading frame. During trans-translation Ala-aminoacylated tmRNA acts like a tRNA, entering the A-site of stalled ribosomes, displacing the stalled mRNA. The ribosome then switches to translate the ORF on the tmRNA; the nascent peptide is terminated with the 'tag peptide' encoded by the tmRNA and targeted for degradation. The ribosome is freed to recommence translation, which seems to be the essential function of trans-translation. The protein is SsrA-binding protein of Bartonella tribocorum (strain CIP 105476 / IBS 506).